We begin with the raw amino-acid sequence, 688 residues long: PR domain zinc finger protein 8 (688 aa).

One can recognise an SET domain in the interval 16–131; it reads KAVQQCLTDI…KDEELLVWYG (116 aa). Tyr-130 contributes to the S-adenosyl-L-methionine binding site. Residues 154–182 form a C2H2-type 1 zinc finger; it reads YTCLECSQRFQFEFPYVAHLRFRCPKRLH. 2 disordered regions span residues 184–309 and 397–506; these read TDAN…GCKG and EEAA…PARS. Residues 192–208 are compositionally biased toward gly residues; that stretch reads QGGGLGTKDHGGGGGGK. 2 stretches are compositionally biased toward low complexity: residues 209-219 and 275-284; these read EQQQQQQQQQQ and GSSSCVAAPG. 2 stretches are compositionally biased toward gly residues: residues 414-424 and 470-489; these read AGGGVAGGGSN and LGGG…GGGQ. 2 consecutive C2H2-type zinc fingers follow at residues 624-647 and 665-687; these read NWCA…RSHH and LKCP…MTSH.

This sequence belongs to the class V-like SAM-binding methyltransferase superfamily. Interacts with BHLHE22. Interacts with EPM2A and NHLRC1. This interaction sequesters EPM2A and NHLRC1 to the nucleus. In terms of tissue distribution, expressed in brain, heart, liver, testes, retina. Highest expression is observed in the retina and hippocampus; moderately expressed in the cortex and cerebellum. In the retina, it is expressed in bipolar and amacrine cells.

It is found in the nucleus. Its function is as follows. Probable histone methyltransferase, preferentially acting on 'Lys-9' of histone H3. Histone methyltransferase activity has not been confirmed in other species. Involved in the control of steroidogenesis through transcriptional repression of steroidogenesis marker genes such as CYP17A1 and LHCGR. Forms with BHLHE22 a transcriptional repressor complex controlling genes involved in neural development and neuronal differentiation. In the retina, it is required for rod bipolar and type 2 OFF-cone bipolar cell survival. This chain is PR domain zinc finger protein 8 (Prdm8), found in Mus musculus (Mouse).